The sequence spans 556 residues: Carotenoid-cleaving dioxygenase, mitochondrial (556 aa).

The Fe cation site is built by H203, H263, H334, and H550.

The protein belongs to the carotenoid oxygenase family. Fe(2+) is required as a cofactor.

It localises to the mitochondrion. The catalysed reaction is all-trans-beta-carotene + O2 = beta-ionone + all-trans-10'-apo-beta-carotenal. It catalyses the reaction 5-cis-lycopene + O2 = 5-cis-10'-apo-lycopenal + (3E,5E)-6,10-dimethylundeca-3,5,9-trien-2-one. The enzyme catalyses 13-cis-lycopene + O2 = 13-cis-10'-apo-lycopenal + (3E,5E)-6,10-dimethylundeca-3,5,9-trien-2-one. It carries out the reaction lutein + O2 = (3R,6R)-hydroxy-alpha-ionone + (3R)-3-hydroxy-10'-apo-beta-carotenal. The catalysed reaction is lutein + O2 = (3R,6R)-3-hydroxy-10'-apo-alpha-carotenal + (3R)-hydroxy-beta-ionone. It catalyses the reaction all-trans-zeaxanthin + 2 O2 = 4,9-dimethyldodeca-2,4,6,8,10-pentaenedial + 2 (3R)-hydroxy-beta-ionone. The enzyme catalyses all-trans-zeaxanthin + O2 = (3R)-3-hydroxy-10'-apo-beta-carotenal + (3R)-hydroxy-beta-ionone. It carries out the reaction beta-cryptoxanthin + O2 = all-trans-10'-apo-beta-carotenal + (3R)-hydroxy-beta-ionone. The catalysed reaction is all-trans-10'-apo-beta-carotenal + O2 = beta-ionone + 4,9-dimethyldodeca-2,4,6,8,10-pentaenedial. It catalyses the reaction (3R)-3-hydroxy-10'-apo-beta-carotenal + O2 = 4,9-dimethyldodeca-2,4,6,8,10-pentaenedial + (3R)-hydroxy-beta-ionone. The enzyme catalyses (3R,6R)-3-hydroxy-10'-apo-alpha-carotenal + O2 = (3R,6R)-hydroxy-alpha-ionone + 4,9-dimethyldodeca-2,4,6,8,10-pentaenedial. In terms of biological role, broad specificity mitochondrial dioxygenase that mediates the asymmetric oxidative cleavage of carotenoids. Cleaves carotenes (pure hydrocarbon carotenoids) such as all-trans-beta-carotene and lycopene as well as xanthophylls (oxygenated carotenoids) such as zeaxanthin, lutein and beta-cryptoxanthin at both the 9,10 and the 9',10' carbon-carbon double bond. Through its function in carotenoids metabolism regulates oxidative stress and the production of important signaling molecules. The polypeptide is Carotenoid-cleaving dioxygenase, mitochondrial (Macaca fascicularis (Crab-eating macaque)).